We begin with the raw amino-acid sequence, 92 residues long: Long neurotoxin 2 (92 aa).

The first 21 residues, 1–21 (MKTLLLTLVVVTIVCLDLGYT), serve as a signal peptide directing secretion. 5 cysteine pairs are disulfide-bonded: Cys24–Cys42, Cys35–Cys63, Cys48–Cys52, Cys67–Cys79, and Cys80–Cys85.

This sequence belongs to the three-finger toxin family. Long-chain subfamily. Type II alpha-neurotoxin sub-subfamily. Expressed by the venom gland.

The protein localises to the secreted. Functionally, binds with high affinity to muscular (alpha-1/CHRNA1) and neuronal (alpha-7/CHRNA7) nicotinic acetylcholine receptor (nAChR) and inhibits acetylcholine from binding to the receptor, thereby impairing neuromuscular and neuronal transmission. This chain is Long neurotoxin 2, found in Oxyuranus microlepidotus (Inland taipan).